The following is a 281-amino-acid chain: BURP domain-containing protein BNM2C (281 aa).

The first 25 residues, 1-25, serve as a signal peptide directing secretion; that stretch reads MASLRFSVTFPALFSLLLSLWVVDA. The region spanning 59 to 281 is the BURP domain; the sequence is FFKISDLKLG…PLDNIVWVSK (223 aa).

In terms of tissue distribution, expressed in the radicle of germinating seeds 2 days post-imbibition (DPI) and in roots of 30-DPI young plants. Expressed in the embryo and seed coat tissues of developing seeds. The protein accumulates only in seeds and only long after transcript accumulation becomes evident.

The protein localises to the protein storage vacuole. The polypeptide is BURP domain-containing protein BNM2C (Brassica napus (Rape)).